The chain runs to 117 residues: Large ribosomal subunit protein bL20 (117 aa).

This sequence belongs to the bacterial ribosomal protein bL20 family.

Binds directly to 23S ribosomal RNA and is necessary for the in vitro assembly process of the 50S ribosomal subunit. It is not involved in the protein synthesizing functions of that subunit. The polypeptide is Large ribosomal subunit protein bL20 (Roseiflexus sp. (strain RS-1)).